We begin with the raw amino-acid sequence, 261 residues long: HLA class II histocompatibility antigen, DM alpha chain (261 aa).

The first 26 residues, M1–A26, serve as a signal peptide directing secretion. Residues V27–R124 are alpha-1. At V27–C233 the chain is on the lumenal side. N-linked (GlcNAc...) asparagine glycosylation occurs at N41. 2 disulfide bridges follow: C50–C105 and C147–C202. One can recognise an Ig-like C1-type domain in the interval P121–A215. The interval G125–W217 is alpha-2. The interval V218–C233 is connecting peptide. The helical transmembrane segment at G234–F254 threads the bilayer. Residues R255–D261 are Cytoplasmic-facing.

It belongs to the MHC class II family. Heterodimer of an alpha chain (DMA) and a beta chain (DMB). Interacts with MHCII; this interaction mediates rapid selection of high-affinity peptides in a pH-dependent manner, with an optimum at pH 5.5.

The protein localises to the late endosome membrane. It localises to the lysosome membrane. Plays a critical role in catalyzing the release of class II-associated invariant chain peptide (CLIP) from newly synthesized MHC class II molecules and freeing the peptide binding site for acquisition of antigenic peptides. In B-cells, the interaction between HLA-DM and MHC class II molecules is regulated by HLA-DO. This Homo sapiens (Human) protein is HLA class II histocompatibility antigen, DM alpha chain (HLA-DMA).